Consider the following 148-residue polypeptide: Deoxyuridine 5'-triphosphate nucleotidohydrolase (148 aa).

Substrate-binding positions include 68–70 (RSG), Asn81, and 85–87 (TID).

This sequence belongs to the dUTPase family. Requires Mg(2+) as cofactor.

It carries out the reaction dUTP + H2O = dUMP + diphosphate + H(+). It functions in the pathway pyrimidine metabolism; dUMP biosynthesis; dUMP from dCTP (dUTP route): step 2/2. Functionally, this enzyme is involved in nucleotide metabolism: it produces dUMP, the immediate precursor of thymidine nucleotides and it decreases the intracellular concentration of dUTP so that uracil cannot be incorporated into DNA. The polypeptide is Deoxyuridine 5'-triphosphate nucleotidohydrolase (Geobacter metallireducens (strain ATCC 53774 / DSM 7210 / GS-15)).